The sequence spans 199 residues: Thymidine kinase (199 aa).

ATP contacts are provided by residues 23–30 (GSMFSGKT) and 95–98 (DEAQ). Residue Glu96 is the Proton acceptor of the active site. The Zn(2+) site is built by Cys152, Cys155, Cys184, and Cys187.

The protein belongs to the thymidine kinase family. In terms of assembly, homotetramer.

Its subcellular location is the cytoplasm. The enzyme catalyses thymidine + ATP = dTMP + ADP + H(+). The chain is Thymidine kinase from Bacteroides fragilis (strain ATCC 25285 / DSM 2151 / CCUG 4856 / JCM 11019 / LMG 10263 / NCTC 9343 / Onslow / VPI 2553 / EN-2).